Consider the following 66-residue polypeptide: Beta-defensin 107A (66 aa).

A signal peptide spans 1 to 22; it reads MKIFFFIFAALILLAQIFQART. 2 disulfides stabilise this stretch: C37/C51 and C41/C60.

Belongs to the beta-defensin family.

The protein resides in the secreted. Functionally, has antibacterial activity. This chain is Beta-defensin 107A (DEFB107A), found in Hylobates lar (Lar gibbon).